Reading from the N-terminus, the 353-residue chain is Photosystem II protein D1 (353 aa).

The residue at position 2 (T2) is an N-acetylthreonine. T2 bears the Phosphothreonine mark. The next 3 membrane-spanning stretches (helical) occupy residues 29–46, 118–133, and 142–156; these read YIGWFGVLMIPTLLTATS, HFLLGVACYMGREWEL, and WIAVAYSAPVAAATA. H118 is a chlorophyll a binding site. Y126 provides a ligand contact to pheophytin a. Residues D170 and E189 each coordinate [CaMn4O5] cluster. A helical membrane pass occupies residues 197 to 218; the sequence is FHMLGVAGVFGGSLFSAMHGSL. H198 contacts chlorophyll a. A quinone-binding positions include H215 and 264–265; that span reads SF. H215 is a Fe cation binding site. H272 serves as a coordination point for Fe cation. A helical transmembrane segment spans residues 274 to 288; the sequence is FLAAWPVAGIWFTAL. [CaMn4O5] cluster is bound by residues H332, E333, D342, and A344. Residues 345-353 constitute a propeptide that is removed on maturation; the sequence is AVESISIGG.

This sequence belongs to the reaction center PufL/M/PsbA/D family. In terms of assembly, PSII is composed of 1 copy each of membrane proteins PsbA, PsbB, PsbC, PsbD, PsbE, PsbF, PsbH, PsbI, PsbJ, PsbK, PsbL, PsbM, PsbT, PsbX, PsbY, PsbZ, Psb30/Ycf12, at least 3 peripheral proteins of the oxygen-evolving complex and a large number of cofactors. It forms dimeric complexes. It depends on The D1/D2 heterodimer binds P680, chlorophylls that are the primary electron donor of PSII, and subsequent electron acceptors. It shares a non-heme iron and each subunit binds pheophytin, quinone, additional chlorophylls, carotenoids and lipids. D1 provides most of the ligands for the Mn4-Ca-O5 cluster of the oxygen-evolving complex (OEC). There is also a Cl(-1) ion associated with D1 and D2, which is required for oxygen evolution. The PSII complex binds additional chlorophylls, carotenoids and specific lipids. as a cofactor. In terms of processing, tyr-161 forms a radical intermediate that is referred to as redox-active TyrZ, YZ or Y-Z. Post-translationally, C-terminally processed by CTPA; processing is essential to allow assembly of the oxygen-evolving complex and thus photosynthetic growth.

The protein localises to the plastid. Its subcellular location is the chloroplast thylakoid membrane. The enzyme catalyses 2 a plastoquinone + 4 hnu + 2 H2O = 2 a plastoquinol + O2. In terms of biological role, photosystem II (PSII) is a light-driven water:plastoquinone oxidoreductase that uses light energy to abstract electrons from H(2)O, generating O(2) and a proton gradient subsequently used for ATP formation. It consists of a core antenna complex that captures photons, and an electron transfer chain that converts photonic excitation into a charge separation. The D1/D2 (PsbA/PsbD) reaction center heterodimer binds P680, the primary electron donor of PSII as well as several subsequent electron acceptors. This chain is Photosystem II protein D1, found in Pinus koraiensis (Korean pine).